The following is a 378-amino-acid chain: MSADQPVTVEVGLGDRAYDILIGSGLLSRAGEEISRRLPGTRAAVVTDENVAAAHLDTLKAGLEKGGIQPTVITMPPGEKTKSFAHLEEVVDGILAARLERGDVVIALGGGVIGDLTGFSAGIVRRGMNFVQVPTSLLAQVDSSVGGKTGINSPRGKNLVGVFLQPKLVLADTEVLDTLPIREFRAGYAELAKYGLIDRPELFAWLEANWQKVFAGGPERAQAIAEACRAKADVVARDEFETGDRALLNLGHTFGHALEAATQYDGARLVHGEGVAIGMALAHRFSSRLNLASPDDAARVETHLRAVGLPWRMADIPGELPDAEALLAFITQDKKVSRGALTFILTRGIGQAFIAKDVPASEVLSFLRENHPTSRKAG.

NAD(+)-binding positions include 111 to 115, 135 to 136, Lys-148, and Lys-157; these read GVIGD and TS. Positions 190, 252, and 271 each coordinate Zn(2+).

This sequence belongs to the sugar phosphate cyclases superfamily. Dehydroquinate synthase family. NAD(+) is required as a cofactor. The cofactor is Co(2+). Requires Zn(2+) as cofactor.

The protein resides in the cytoplasm. It catalyses the reaction 7-phospho-2-dehydro-3-deoxy-D-arabino-heptonate = 3-dehydroquinate + phosphate. It participates in metabolic intermediate biosynthesis; chorismate biosynthesis; chorismate from D-erythrose 4-phosphate and phosphoenolpyruvate: step 2/7. Functionally, catalyzes the conversion of 3-deoxy-D-arabino-heptulosonate 7-phosphate (DAHP) to dehydroquinate (DHQ). The polypeptide is 3-dehydroquinate synthase (Mesorhizobium japonicum (strain LMG 29417 / CECT 9101 / MAFF 303099) (Mesorhizobium loti (strain MAFF 303099))).